Reading from the N-terminus, the 632-residue chain is Probable potassium transport system protein Kup 3 (632 aa).

Helical transmembrane passes span 17–37 (LFYLALGSVGVVYGDIGTSPL), 60–80 (LISLMIWALTIIVTIKYVLFL), 106–126 (TAILMLLGLMGAALFLGDAMI), 144–164 (PSLSDYIVPISVVILALLFVV), 175–195 (FFGPITAVWFLVMAAAGISHI), 210–230 (AVSFLLHEGFYGVVVLGAVFL), 254–274 (WFLLVFPALTLNYLGQGALVL), 292–312 (ALLPVVILATAATIIASQAVI), 344–364 (IFVPSVNAVLFIGVIFLVLSF), 370–390 (LATAYGISVTGAMVVTSIMAF), 401–421 (LPLAVVALAPLVVLELIFLGA), and 426–446 (IHDGGYIPILIATAFTVIMWT).

The protein belongs to the HAK/KUP transporter (TC 2.A.72) family.

Its subcellular location is the cell inner membrane. The enzyme catalyses K(+)(in) + H(+)(in) = K(+)(out) + H(+)(out). Its function is as follows. Transport of potassium into the cell. Likely operates as a K(+):H(+) symporter. This is Probable potassium transport system protein Kup 3 from Rhizobium etli (strain ATCC 51251 / DSM 11541 / JCM 21823 / NBRC 15573 / CFN 42).